The following is a 132-amino-acid chain: Small ribosomal subunit protein uS8 (132 aa).

This sequence belongs to the universal ribosomal protein uS8 family. Part of the 30S ribosomal subunit. Contacts proteins S5 and S12.

One of the primary rRNA binding proteins, it binds directly to 16S rRNA central domain where it helps coordinate assembly of the platform of the 30S subunit. The polypeptide is Small ribosomal subunit protein uS8 (Alkaliphilus metalliredigens (strain QYMF)).